The primary structure comprises 148 residues: Large ribosomal subunit protein bL9 (148 aa).

It belongs to the bacterial ribosomal protein bL9 family.

Functionally, binds to the 23S rRNA. This chain is Large ribosomal subunit protein bL9, found in Staphylococcus haemolyticus (strain JCSC1435).